A 257-amino-acid chain; its full sequence is Short-chain dehydrogenase reductase 3b (257 aa).

12–36 is a binding site for NAD(+); that stretch reads IITGGASGIGAESVRLFTEHGARVV. Ser-144 serves as a coordination point for substrate. The active-site Proton acceptor is the Tyr-157.

This sequence belongs to the short-chain dehydrogenases/reductases (SDR) family.

In Arabidopsis thaliana (Mouse-ear cress), this protein is Short-chain dehydrogenase reductase 3b (SDR3b).